The primary structure comprises 177 residues: Large ribosomal subunit protein uL6 (177 aa).

It belongs to the universal ribosomal protein uL6 family. In terms of assembly, part of the 50S ribosomal subunit.

Its function is as follows. This protein binds to the 23S rRNA, and is important in its secondary structure. It is located near the subunit interface in the base of the L7/L12 stalk, and near the tRNA binding site of the peptidyltransferase center. The protein is Large ribosomal subunit protein uL6 of Leptothrix cholodnii (strain ATCC 51168 / LMG 8142 / SP-6) (Leptothrix discophora (strain SP-6)).